The primary structure comprises 62 residues: Large ribosomal subunit protein uL29 (62 aa).

It belongs to the universal ribosomal protein uL29 family.

This is Large ribosomal subunit protein uL29 from Enterococcus faecalis (strain ATCC 700802 / V583).